The sequence spans 306 residues: Ribosomal protein L11 methyltransferase (306 aa).

S-adenosyl-L-methionine is bound by residues T154, G179, D201, and N242.

It belongs to the methyltransferase superfamily. PrmA family.

It is found in the cytoplasm. The enzyme catalyses L-lysyl-[protein] + 3 S-adenosyl-L-methionine = N(6),N(6),N(6)-trimethyl-L-lysyl-[protein] + 3 S-adenosyl-L-homocysteine + 3 H(+). Methylates ribosomal protein L11. The polypeptide is Ribosomal protein L11 methyltransferase (Stenotrophomonas maltophilia (strain K279a)).